Consider the following 126-residue polypeptide: MWKEFKKFAMRGNVIDLAVAVVLGAAFTAIVNSLVNDIFMPLLGIIIGGIDFSSLKASILGVDVLYGNFIQQIVSFFLIAIALFLIVKVINRLQREKEVEEAAIPTPTKEEQLLTEIRDLLKDRSL.

Transmembrane regions (helical) follow at residues 8-28 (FAMR…AAFT) and 70-90 (IQQI…VKVI).

The protein belongs to the MscL family. In terms of assembly, homopentamer.

It localises to the cell membrane. In terms of biological role, channel that opens in response to stretch forces in the membrane lipid bilayer. May participate in the regulation of osmotic pressure changes within the cell. The chain is Large-conductance mechanosensitive channel from Exiguobacterium sp. (strain ATCC BAA-1283 / AT1b).